Here is a 275-residue protein sequence, read N- to C-terminus: Putative phosphoenolpyruvate synthase regulatory protein (275 aa).

157–164 (GVSRCGKT) is a binding site for ADP.

It belongs to the pyruvate, phosphate/water dikinase regulatory protein family. PSRP subfamily.

The enzyme catalyses [pyruvate, water dikinase] + ADP = [pyruvate, water dikinase]-phosphate + AMP + H(+). It carries out the reaction [pyruvate, water dikinase]-phosphate + phosphate + H(+) = [pyruvate, water dikinase] + diphosphate. Functionally, bifunctional serine/threonine kinase and phosphorylase involved in the regulation of the phosphoenolpyruvate synthase (PEPS) by catalyzing its phosphorylation/dephosphorylation. The protein is Putative phosphoenolpyruvate synthase regulatory protein of Bordetella pertussis (strain Tohama I / ATCC BAA-589 / NCTC 13251).